A 364-amino-acid chain; its full sequence is UDP-N-acetylglucosamine--N-acetylmuramyl-(pentapeptide) pyrophosphoryl-undecaprenol N-acetylglucosamine transferase (364 aa).

UDP-N-acetyl-alpha-D-glucosamine-binding positions include 10 to 12 (TGG), N128, R170, S199, I250, and Q295.

This sequence belongs to the glycosyltransferase 28 family. MurG subfamily.

It is found in the cell inner membrane. It carries out the reaction di-trans,octa-cis-undecaprenyl diphospho-N-acetyl-alpha-D-muramoyl-L-alanyl-D-glutamyl-meso-2,6-diaminopimeloyl-D-alanyl-D-alanine + UDP-N-acetyl-alpha-D-glucosamine = di-trans,octa-cis-undecaprenyl diphospho-[N-acetyl-alpha-D-glucosaminyl-(1-&gt;4)]-N-acetyl-alpha-D-muramoyl-L-alanyl-D-glutamyl-meso-2,6-diaminopimeloyl-D-alanyl-D-alanine + UDP + H(+). It participates in cell wall biogenesis; peptidoglycan biosynthesis. Cell wall formation. Catalyzes the transfer of a GlcNAc subunit on undecaprenyl-pyrophosphoryl-MurNAc-pentapeptide (lipid intermediate I) to form undecaprenyl-pyrophosphoryl-MurNAc-(pentapeptide)GlcNAc (lipid intermediate II). The protein is UDP-N-acetylglucosamine--N-acetylmuramyl-(pentapeptide) pyrophosphoryl-undecaprenol N-acetylglucosamine transferase of Chlorobium phaeobacteroides (strain DSM 266 / SMG 266 / 2430).